The primary structure comprises 229 residues: Uracil-DNA glycosylase (229 aa).

Catalysis depends on aspartate 71, which acts as the Proton acceptor.

Belongs to the uracil-DNA glycosylase (UDG) superfamily. UNG family.

The protein localises to the cytoplasm. The catalysed reaction is Hydrolyzes single-stranded DNA or mismatched double-stranded DNA and polynucleotides, releasing free uracil.. Excises uracil residues from the DNA which can arise as a result of misincorporation of dUMP residues by DNA polymerase or due to deamination of cytosine. The polypeptide is Uracil-DNA glycosylase (Campylobacter lari (strain RM2100 / D67 / ATCC BAA-1060)).